The following is a 335-amino-acid chain: DNA-directed RNA polymerase subunit alpha (335 aa).

The interval 1–233 (MIRDEISVSI…DLFIPFLHGE (233 aa)) is alpha N-terminal domain (alpha-NTD). The alpha C-terminal domain (alpha-CTD) stretch occupies residues 264-335 (KEKIAFQLIF…KLFAIDPPRN (72 aa)).

It belongs to the RNA polymerase alpha chain family. As to quaternary structure, in plastids the minimal PEP RNA polymerase catalytic core is composed of four subunits: alpha, beta, beta', and beta''. When a (nuclear-encoded) sigma factor is associated with the core the holoenzyme is formed, which can initiate transcription.

It is found in the plastid. The protein localises to the chloroplast. It catalyses the reaction RNA(n) + a ribonucleoside 5'-triphosphate = RNA(n+1) + diphosphate. In terms of biological role, DNA-dependent RNA polymerase catalyzes the transcription of DNA into RNA using the four ribonucleoside triphosphates as substrates. This is DNA-directed RNA polymerase subunit alpha from Pinus thunbergii (Japanese black pine).